A 612-amino-acid chain; its full sequence is Indole-3-acetic acid-amido synthetase GH3.6 (612 aa).

It belongs to the IAA-amido conjugating enzyme family. Expressed in cotyledons, stipules, true leaves, hypocotyls, and all parts of the roots. Not detected in flowers.

Its function is as follows. Catalyzes the synthesis of indole-3-acetic acid (IAA)-amino acid conjugates, providing a mechanism for the plant to cope with the presence of excess auxin. Strongly reactive with Glu, Gln, Trp, Asp, Ala, Leu, Phe, Gly, Tyr, Met, Ile and Val. Little or no product formation with His, Ser, Thr, Arg, Lys, or Cys. Also active on pyruvic and butyric acid analogs of IAA, PAA and the synthetic auxin naphthaleneacetic acid (NAA). The two chlorinated synthetic auxin herbicides 2,4-D and 3,6-dichloro-o-anisic acid (dicamba) cannot be used as substrates. Involved in auxin signal transduction. Inhibits shoot and hypocotyl cell elongation, and lateral root cell differentiation in light. In Arabidopsis thaliana (Mouse-ear cress), this protein is Indole-3-acetic acid-amido synthetase GH3.6 (GH3.6).